Consider the following 129-residue polypeptide: Translation initiation factor 5A (129 aa).

The residue at position 36 (Lys36) is a Hypusine.

Belongs to the eIF-5A family.

Its subcellular location is the cytoplasm. In terms of biological role, functions by promoting the formation of the first peptide bond. The polypeptide is Translation initiation factor 5A (Picrophilus torridus (strain ATCC 700027 / DSM 9790 / JCM 10055 / NBRC 100828 / KAW 2/3)).